Here is a 404-residue protein sequence, read N- to C-terminus: uncharacterized protein (404 aa).

This is an uncharacterized protein from Ostreid herpesvirus 1 (isolate France) (OsHV-1).